The following is a 518-amino-acid chain: ATP synthase subunit alpha (518 aa).

Position 169 to 176 (Gly-169 to Thr-176) interacts with ATP.

Belongs to the ATPase alpha/beta chains family. F-type ATPases have 2 components, CF(1) - the catalytic core - and CF(0) - the membrane proton channel. CF(1) has five subunits: alpha(3), beta(3), gamma(1), delta(1), epsilon(1). CF(0) has three main subunits: a(1), b(2) and c(9-12). The alpha and beta chains form an alternating ring which encloses part of the gamma chain. CF(1) is attached to CF(0) by a central stalk formed by the gamma and epsilon chains, while a peripheral stalk is formed by the delta and b chains.

It is found in the cell membrane. It catalyses the reaction ATP + H2O + 4 H(+)(in) = ADP + phosphate + 5 H(+)(out). Produces ATP from ADP in the presence of a proton gradient across the membrane. The alpha chain is a regulatory subunit. In Mycoplasma genitalium (strain ATCC 33530 / DSM 19775 / NCTC 10195 / G37) (Mycoplasmoides genitalium), this protein is ATP synthase subunit alpha.